The chain runs to 473 residues: Argininosuccinate lyase (473 aa).

Residue Ala2 is modified to N-acetylalanine. Lys7 carries the N6-acetyllysine modification. Ser27 provides a ligand contact to 2-(N(omega)-L-arginino)succinate. Lys69 carries the N6-acetyllysine modification. 2-(N(omega)-L-arginino)succinate is bound by residues Asn114 and Thr159. Residue His160 is the Proton acceptor of the active site. Ser281 (proton donor) is an active-site residue. Lys288 is subject to N6-acetyllysine. 2-(N(omega)-L-arginino)succinate contacts are provided by Asn289, Tyr321, Gln326, and Lys329.

The protein belongs to the lyase 1 family. Argininosuccinate lyase subfamily. In terms of assembly, homotetramer. Forms tissue-specific complexes with ASS1, SLC7A1, HSP90AA1 and nitric oxide synthase NOS1, NOS2 or NOS3; the complex maintenance is independent of ASL catalytic function. Acetylation modifies enzyme activity in response to alterations of extracellular nutrient availability. Acetylation increased with trichostin A (TSA) or with nicotinamide (NAM). Glucose increases acetylation by about a factor of 3 with decreasing enzyme activity. Acetylation on Lys-288 is decreased on the addition of extra amino acids resulting in activation of enzyme activity.

It catalyses the reaction 2-(N(omega)-L-arginino)succinate = fumarate + L-arginine. It participates in amino-acid biosynthesis; L-arginine biosynthesis; L-arginine from L-ornithine and carbamoyl phosphate: step 3/3. It functions in the pathway nitrogen metabolism; urea cycle; L-arginine and fumarate from (N(omega)-L-arginino)succinate: step 1/1. With respect to regulation, enzyme activity is regulated by acetylation. Functionally, catalyzes the reversible cleavage of L-argininosuccinate to fumarate and L-arginine, an intermediate step reaction in the urea cycle mostly providing for hepatic nitrogen detoxification into excretable urea as well as de novo L-arginine synthesis in nonhepatic tissues. Essential regulator of intracellular and extracellular L-arginine pools. As part of citrulline-nitric oxide cycle, forms tissue-specific multiprotein complexes with argininosuccinate synthase ASS1, transport protein SLC7A1 and nitric oxide synthase NOS1, NOS2 or NOS3, allowing for cell-autonomous L-arginine synthesis while channeling extracellular L-arginine to nitric oxide synthesis pathway. The polypeptide is Argininosuccinate lyase (ASL) (Bos taurus (Bovine)).